Here is a 310-residue protein sequence, read N- to C-terminus: Nitric oxide synthase-interacting protein homolog (310 aa).

Over residues 115–124 (FSAIESTPSR) the composition is skewed to polar residues. Positions 115–141 (FSAIESTPSRTGAVATPRPEVGSLKRQ) are disordered.

It belongs to the NOSIP family.

It is found in the cytoplasm. It localises to the nucleus. Its function is as follows. Negatively regulates nitric oxide production by inducing nitric oxide synthase translocation to actin cytoskeleton and inhibiting its enzymatic activity. The sequence is that of Nitric oxide synthase-interacting protein homolog from Caenorhabditis elegans.